We begin with the raw amino-acid sequence, 289 residues long: Pyridoxal kinase PdxY (289 aa).

Substrate-binding positions include Ser-9 and 44 to 45 (TQ). ATP is bound by residues Asp-112, Val-144, Glu-149, and Lys-182. Position 221 (Asp-221) interacts with substrate.

It belongs to the pyridoxine kinase family. PdxY subfamily. As to quaternary structure, homodimer. The cofactor is Mg(2+).

The enzyme catalyses pyridoxal + ATP = pyridoxal 5'-phosphate + ADP + H(+). It participates in cofactor metabolism; pyridoxal 5'-phosphate salvage; pyridoxal 5'-phosphate from pyridoxal: step 1/1. In terms of biological role, pyridoxal kinase involved in the salvage pathway of pyridoxal 5'-phosphate (PLP). Catalyzes the phosphorylation of pyridoxal to PLP. This Vibrio parahaemolyticus serotype O3:K6 (strain RIMD 2210633) protein is Pyridoxal kinase PdxY.